A 256-amino-acid polypeptide reads, in one-letter code: Type III pantothenate kinase (256 aa).

Residue 6-13 coordinates ATP; the sequence is DAGNSRIK. Residues Tyr90 and 97-100 each bind substrate; that span reads GSDR. Asp99 serves as the catalytic Proton acceptor. Thr123 serves as a coordination point for ATP. A substrate-binding site is contributed by Thr187.

This sequence belongs to the type III pantothenate kinase family. Homodimer. It depends on NH4(+) as a cofactor. The cofactor is K(+).

Its subcellular location is the cytoplasm. It carries out the reaction (R)-pantothenate + ATP = (R)-4'-phosphopantothenate + ADP + H(+). It participates in cofactor biosynthesis; coenzyme A biosynthesis; CoA from (R)-pantothenate: step 1/5. Catalyzes the phosphorylation of pantothenate (Pan), the first step in CoA biosynthesis. The protein is Type III pantothenate kinase of Burkholderia mallei (strain NCTC 10247).